The sequence spans 284 residues: ATP synthase subunit a (284 aa).

5 consecutive transmembrane segments (helical) span residues alanine 47–phenylalanine 67, valine 108–valine 128, valine 156–isoleucine 176, methionine 233–tryptophan 253, and alanine 254–valine 274.

It belongs to the ATPase A chain family. As to quaternary structure, F-type ATPases have 2 components, CF(1) - the catalytic core - and CF(0) - the membrane proton channel. CF(1) has five subunits: alpha(3), beta(3), gamma(1), delta(1), epsilon(1). CF(0) has three main subunits: a(1), b(2) and c(9-12). The alpha and beta chains form an alternating ring which encloses part of the gamma chain. CF(1) is attached to CF(0) by a central stalk formed by the gamma and epsilon chains, while a peripheral stalk is formed by the delta and b chains.

The protein resides in the cell inner membrane. Its function is as follows. Key component of the proton channel; it plays a direct role in the translocation of protons across the membrane. This Ruthia magnifica subsp. Calyptogena magnifica protein is ATP synthase subunit a.